We begin with the raw amino-acid sequence, 566 residues long: Bacillolysin (566 aa).

Residues 1 to 27 (MKKKSLALVLATGMAVTTFGGTGSAFA) form the signal peptide. Positions 28–249 (DSKNVLSTKK…KQDAKAVVKP (222 aa)) are cleaved as a propeptide — activation peptide. Residues aspartate 307, aspartate 309, valine 311, and aspartate 388 each coordinate Ca(2+). Histidine 392 is a Zn(2+) binding site. Glutamate 393 is a catalytic residue. Histidine 396 and glutamate 416 together coordinate Zn(2+). Positions 427, 433, 435, 437, 440, 443, 444, 447, and 450 each coordinate Ca(2+). Histidine 481 serves as the catalytic Proton donor.

Belongs to the peptidase M4 family. It depends on Ca(2+) as a cofactor. Zn(2+) serves as cofactor.

It localises to the secreted. It catalyses the reaction Similar, but not identical, to that of thermolysin.. In terms of biological role, extracellular zinc metalloprotease. The sequence is that of Bacillolysin (npr) from Bacillus cereus.